The sequence spans 251 residues: MTIQLINESSNTEKFQQICDKWRLVHDRSAILALVLTDERLELRKLDEPKLGAIAVNFVDGTMAHRRKFGGGRGEAVAKAVGIKGDYLPTIIDATAGLGRDAFVLASVGCKVLLVERNPIVAALLEDGLVRAYADPEIGAFMQERMILADVRDISLLDVAQQAADVVYLDPMYPHKQKSALVKKEMRVFQHLVGADLDSDNFFVPAKALARKRVVVKRPDYAPFLAEQKPDFSQTTKNHRFDVYLSHLKSA.

S-adenosyl-L-methionine is bound by residues 100–101 (RD), 116–117 (ER), and D170.

It belongs to the methyltransferase superfamily. RsmJ family.

The protein resides in the cytoplasm. It catalyses the reaction guanosine(1516) in 16S rRNA + S-adenosyl-L-methionine = N(2)-methylguanosine(1516) in 16S rRNA + S-adenosyl-L-homocysteine + H(+). In terms of biological role, specifically methylates the guanosine in position 1516 of 16S rRNA. This chain is Ribosomal RNA small subunit methyltransferase J, found in Actinobacillus pleuropneumoniae serotype 3 (strain JL03).